We begin with the raw amino-acid sequence, 549 residues long: Efflux pump patC (549 aa).

Residues 1–12 show a composition bias toward polar residues; it reads MAESTAHTSPSL. Residues 1–40 are disordered; that stretch reads MAESTAHTSPSLNDKEREVDQGILSDESGPAEEVKETPDQ. 14 consecutive transmembrane segments (helical) span residues 50–70, 85–105, 116–136, 146–166, 178–198, 206–226, 252–272, 282–302, 321–341, 360–380, 385–405, 419–439, 460–482, and 526–546; these read LLIC…NTIV, AQLG…ILPL, WLFI…GGAP, VWAG…ITIL, LVGL…GAFA, WGFY…VFLL, VLSA…GVMW, LYVV…FCVL, IALY…VYYI, LLPF…LMPK, VLWY…MYTV, ILLG…PSLV, LLGL…NALL, and VYVM…FLPW.

It belongs to the major facilitator superfamily. TCR/Tet family.

Its subcellular location is the vacuole membrane. It is found in the cell membrane. Functionally, efflux pump; part of the gene cluster that mediates the biosynthesis of patulin, an acetate-derived tetraketide mycotoxin produced by several fungal species that shows antimicrobial properties against several bacteria. May be involved in the secretion of E-ascladiol to be converted to patulin by the secreted patulin synthase patE. This is Efflux pump patC from Aspergillus clavatus (strain ATCC 1007 / CBS 513.65 / DSM 816 / NCTC 3887 / NRRL 1 / QM 1276 / 107).